The chain runs to 202 residues: Large ribosomal subunit protein uL5 (202 aa).

Residues 1–17 (MSAKAATKNATKVAVKA) show a composition bias toward low complexity. The tract at residues 1–30 (MSAKAATKNATKVAVKAPEATTPVETKKSK) is disordered.

This sequence belongs to the universal ribosomal protein uL5 family. In terms of assembly, component of the large ribosomal subunit.

The protein localises to the nucleus. It is found in the cytoplasm. Component of the ribosome, a large ribonucleoprotein complex responsible for the synthesis of proteins in the cell. The small ribosomal subunit (SSU) binds messenger RNAs (mRNAs) and translates the encoded message by selecting cognate aminoacyl-transfer RNA (tRNA) molecules. The large subunit (LSU) contains the ribosomal catalytic site termed the peptidyl transferase center (PTC), which catalyzes the formation of peptide bonds, thereby polymerizing the amino acids delivered by tRNAs into a polypeptide chain. The nascent polypeptides leave the ribosome through a tunnel in the LSU and interact with protein factors that function in enzymatic processing, targeting, and the membrane insertion of nascent chains at the exit of the ribosomal tunnel. The sequence is that of Large ribosomal subunit protein uL5 (rpl11) from Dictyostelium discoideum (Social amoeba).